Consider the following 94-residue polypeptide: Protein RnfH (94 aa).

It belongs to the UPF0125 (RnfH) family.

This chain is Protein RnfH, found in Yersinia pestis bv. Antiqua (strain Antiqua).